A 282-amino-acid polypeptide reads, in one-letter code: Armadillo repeat-containing protein 1 (282 aa).

Methionine 1 carries the post-translational modification N-acetylmethionine. An ARM repeat occupies glycine 39–glycine 81. Position 137 is a phosphothreonine (threonine 137). Residues serine 189, serine 246, serine 260, and serine 267 each carry the phosphoserine modification. Positions aspartate 239–histidine 261 are disordered. Positions serine 246–valine 255 are enriched in basic and acidic residues.

Interacts with mitochondrial contact site and cristae organizing system (MICOS) complex components IMMT/MIC60 and MICOS10/MIC10. Interacts with mitochondrial outer membrane sorting assembly machinery (SAM) complex components SAMM50 and MTX1.

The protein resides in the cytoplasm. The protein localises to the mitochondrion. Its subcellular location is the mitochondrion outer membrane. Its function is as follows. In association with mitochondrial contact site and cristae organizing system (MICOS) complex components and mitochondrial outer membrane sorting assembly machinery (SAM) complex components may regulate mitochondrial dynamics playing a role in determining mitochondrial length, distribution and motility. This is Armadillo repeat-containing protein 1 (Armc1) from Mus musculus (Mouse).